We begin with the raw amino-acid sequence, 285 residues long: Bifunctional protein FolD (285 aa).

Residues G164 to S166, S189, and I230 each bind NADP(+).

This sequence belongs to the tetrahydrofolate dehydrogenase/cyclohydrolase family. Homodimer.

The enzyme catalyses (6R)-5,10-methylene-5,6,7,8-tetrahydrofolate + NADP(+) = (6R)-5,10-methenyltetrahydrofolate + NADPH. It catalyses the reaction (6R)-5,10-methenyltetrahydrofolate + H2O = (6R)-10-formyltetrahydrofolate + H(+). It functions in the pathway one-carbon metabolism; tetrahydrofolate interconversion. Functionally, catalyzes the oxidation of 5,10-methylenetetrahydrofolate to 5,10-methenyltetrahydrofolate and then the hydrolysis of 5,10-methenyltetrahydrofolate to 10-formyltetrahydrofolate. The protein is Bifunctional protein FolD of Oceanobacillus iheyensis (strain DSM 14371 / CIP 107618 / JCM 11309 / KCTC 3954 / HTE831).